A 138-amino-acid chain; its full sequence is Basic phospholipase A2 homolog Tbo-K49 (138 aa).

The N-terminal stretch at 1–16 (MRTLWIMAVLLVGVEG) is a signal peptide. 6 cysteine pairs are disulfide-bonded: Cys-42-Cys-131, Cys-44-Cys-60, Cys-59-Cys-111, Cys-65-Cys-138, Cys-66-Cys-104, and Cys-91-Cys-102. Positions 121–133 (KKERINTKIFCKK) are important for membrane-damaging activities in eukaryotes and bacteria; heparin-binding.

In terms of assembly, monomer. Expressed by the venom gland.

Its subcellular location is the secreted. In terms of biological role, snake venom phospholipase A2 homolog that lacks catalytic activity. It induces local edema. Is myotoxic. A model of myotoxic mechanism has been proposed: an apo Lys49-PLA2 is activated by the entrance of a hydrophobic molecule (e.g. fatty acid) at the hydrophobic channel of the protein leading to a reorientation of a monomer. This reorientation causes a transition between 'inactive' to 'active' states, causing alignment of C-terminal and membrane-docking sites (MDoS) side-by-side and putting the membrane-disruption sites (MDiS) in the same plane, exposed to solvent and in a symmetric position for both monomers. The MDoS region stabilizes the toxin on membrane by the interaction of charged residues with phospholipid head groups. Subsequently, the MDiS region destabilizes the membrane with penetration of hydrophobic residues. This insertion causes a disorganization of the membrane, allowing an uncontrolled influx of ions (i.e. calcium and sodium), and eventually triggering irreversible intracellular alterations and cell death. In Craspedocephalus borneensis (Borneo pit viper), this protein is Basic phospholipase A2 homolog Tbo-K49.